The sequence spans 61 residues: MAKKSMIAKQKRPAKFSTREYNRCKICGRPHGYLKKYGICRICFRELAYKGEIPGVRKASW.

4 residues coordinate Zn(2+): C24, C27, C40, and C43.

It belongs to the universal ribosomal protein uS14 family. Zinc-binding uS14 subfamily. As to quaternary structure, part of the 30S ribosomal subunit. Contacts proteins S3 and S10. Requires Zn(2+) as cofactor.

Its function is as follows. Binds 16S rRNA, required for the assembly of 30S particles and may also be responsible for determining the conformation of the 16S rRNA at the A site. This is Small ribosomal subunit protein uS14 from Finegoldia magna (strain ATCC 29328 / DSM 20472 / WAL 2508) (Peptostreptococcus magnus).